The sequence spans 1061 residues: Ceruloplasmin (1061 aa).

An N-terminal signal peptide occupies residues 1–19 (MKFLLLSTFIFLYSSLALA). 6 consecutive Plastocyanin-like domains span residues 20-199 (RDKH…LILC), 208-356 (KEKN…VRDC), 369-555 (HVRH…MKIC), 565-713 (RQKD…VNQC), 725-895 (GERT…LIVC), and 903-1057 (FSPK…VEQE). Tyr-55, Gly-64, and Tyr-67 together coordinate Na(+). His-120 and His-122 together coordinate Cu(2+). Residue His-120 participates in O2 binding. Ca(2+) is bound at residue Lys-128. A glycan (N-linked (GlcNAc...) asparagine) is linked at Asn-138. Ca(2+)-binding residues include Gln-143, Asp-146, and Asp-147. Cys-173 and Cys-199 are oxidised to a cystine. Positions 179 and 181 each coordinate Cu(2+). Residue His-179 participates in O2 binding. An N-linked (GlcNAc...) asparagine glycan is attached at Asn-226. Ser-255 is a Na(+) binding site. Cys-275 and Cys-356 are disulfide-bonded. Cu(2+)-binding residues include His-294, Cys-337, and His-342. Asn-396 carries an N-linked (GlcNAc...) asparagine glycan. Phe-407, Gly-416, and Tyr-419 together coordinate Na(+). A disulfide bridge connects residues Cys-529 and Cys-555. Residue Asn-583 is glycosylated (N-linked (GlcNAc...) asparagine). Position 612 (Ser-612) interacts with Na(+). A disulfide bond links Cys-632 and Cys-713. Cu(2+) contacts are provided by His-651, Cys-694, His-699, and Met-704. Cys-694 acts as the Nucleophile; for glutathione peroxidase activity in catalysis. Residue Asn-757 is glycosylated (N-linked (GlcNAc...) asparagine). Residues Phe-762, Gly-771, and Tyr-774 each contribute to the Na(+) site. Residues Cys-869 and Cys-895 are joined by a disulfide bond. N-linked (GlcNAc...) asparagine glycosylation occurs at Asn-921. A Na(+)-binding site is contributed by Ser-950. Cu(2+) contacts are provided by His-989, His-992, His-994, His-1034, Cys-1035, His-1036, His-1040, and Met-1045. O2 is bound by residues His-992 and His-994. His-1036 provides a ligand contact to O2.

This sequence belongs to the multicopper oxidase family. In terms of assembly, found in a complex with MPO and LTF; interacts directly with MPO and LTF, which allows Fe(3+) incorporation into LTF, activation of CP ferroxidase activity and protection of CP antioxidant properties by MPO. The cofactor is Cu(2+). In terms of tissue distribution, expressed in many tissues, including liver, eye and brain.

The protein resides in the secreted. It carries out the reaction 4 Fe(2+) + O2 + 4 H(+) = 4 Fe(3+) + 2 H2O. The catalysed reaction is 4 Cu(+) + O2 + 4 H(+) = 4 Cu(2+) + 2 H2O. The enzyme catalyses a hydroperoxide + 2 glutathione = an alcohol + glutathione disulfide + H2O. It catalyses the reaction 4 nitric oxide + O2 + 2 H2O = 4 nitrite + 4 H(+). It carries out the reaction 2 glutathione + H2O2 = glutathione disulfide + 2 H2O. Its function is as follows. Multifunctional blue, copper-binding (6-7 atoms per molecule) glycoprotein. It has ferroxidase activity oxidizing Fe(2+) to Fe(3+) without releasing radical oxygen species. It is involved in iron transport across the cell membrane. Copper ions provide a large number of enzymatic activites. Oxidizes highly toxic ferrous ions to the ferric state for further incorporation onto apo-transferrins, catalyzes Cu(+) oxidation and promotes the oxidation of biogenic amines such as norepinephrin and serotonin. Provides Cu(2+) ions for the ascorbate-mediated deaminase degradation of the heparan sulfate chains of GPC1. Has glutathione peroxidase-like activity, can remove both hydrogen peroxide and lipid hydroperoxide in the presence of thiols. Also shows NO-oxidase and NO2 synthase activities that determine endocrine NO homeostasis. The protein is Ceruloplasmin (Cp) of Mus musculus (Mouse).